Reading from the N-terminus, the 360-residue chain is UDP-3-O-acylglucosamine N-acyltransferase (360 aa).

Catalysis depends on histidine 248, which acts as the Proton acceptor.

Belongs to the transferase hexapeptide repeat family. LpxD subfamily. As to quaternary structure, homotrimer.

It catalyses the reaction a UDP-3-O-[(3R)-3-hydroxyacyl]-alpha-D-glucosamine + a (3R)-hydroxyacyl-[ACP] = a UDP-2-N,3-O-bis[(3R)-3-hydroxyacyl]-alpha-D-glucosamine + holo-[ACP] + H(+). It participates in bacterial outer membrane biogenesis; LPS lipid A biosynthesis. Catalyzes the N-acylation of UDP-3-O-acylglucosamine using 3-hydroxyacyl-ACP as the acyl donor. Is involved in the biosynthesis of lipid A, a phosphorylated glycolipid that anchors the lipopolysaccharide to the outer membrane of the cell. This chain is UDP-3-O-acylglucosamine N-acyltransferase, found in Chlamydia pneumoniae (Chlamydophila pneumoniae).